A 173-amino-acid polypeptide reads, in one-letter code: Large ribosomal subunit protein uL10 (173 aa).

It belongs to the universal ribosomal protein uL10 family. As to quaternary structure, part of the ribosomal stalk of the 50S ribosomal subunit. The N-terminus interacts with L11 and the large rRNA to form the base of the stalk. The C-terminus forms an elongated spine to which L12 dimers bind in a sequential fashion forming a multimeric L10(L12)X complex.

Forms part of the ribosomal stalk, playing a central role in the interaction of the ribosome with GTP-bound translation factors. The chain is Large ribosomal subunit protein uL10 from Bifidobacterium longum (strain DJO10A).